Consider the following 134-residue polypeptide: Inner membrane protein YqjE (134 aa).

The Cytoplasmic portion of the chain corresponds to 1–55 (MADTHHAQGPGKSVLGIGQRIVSIMVEMVETRLRLAVVELEEEKANLFQLLLMLG). A helical transmembrane segment spans residues 56 to 76 (LTMLFAAFGLMSLMVLIIWAV). Residues 77-83 (DPQYRLN) are Periplasmic-facing. Residues 84–104 (AMIATTVVLLLLALIGGIWTL) form a helical membrane-spanning segment. Residues 105-134 (RKSRKSTLLRHTRHELANDRQLLEEESREQ) lie on the Cytoplasmic side of the membrane.

The protein localises to the cell inner membrane. The sequence is that of Inner membrane protein YqjE (yqjE) from Escherichia coli O157:H7.